The following is a 314-amino-acid chain: Homoserine kinase (314 aa).

Position 96–106 (96–106 (PIGSGLGSSAC)) interacts with ATP.

Belongs to the GHMP kinase family. Homoserine kinase subfamily.

Its subcellular location is the cytoplasm. It catalyses the reaction L-homoserine + ATP = O-phospho-L-homoserine + ADP + H(+). Its pathway is amino-acid biosynthesis; L-threonine biosynthesis; L-threonine from L-aspartate: step 4/5. Its function is as follows. Catalyzes the ATP-dependent phosphorylation of L-homoserine to L-homoserine phosphate. The sequence is that of Homoserine kinase from Mannheimia succiniciproducens (strain KCTC 0769BP / MBEL55E).